The primary structure comprises 417 residues: Monooxygenase cfoF (417 aa).

FAD contacts are provided by residues 45 to 48 (DRDK), R126, and D327. The span at 389–399 (AHTTQLDRDQF) shows a compositional bias: basic and acidic residues. The tract at residues 389–417 (AHTTQLDRDQFTDGSGANDFLVGQQHSDK) is disordered.

Belongs to the aromatic-ring hydroxylase family. KMO subfamily. The cofactor is FAD.

It functions in the pathway secondary metabolite biosynthesis; flavonoid biosynthesis. Functionally, monooxygenase; part of the gene cluster that mediates the biosynthesis of chlorflavonin, a fungal flavonoid with acetolactate synthase inhibitory activity. Within the pathway, cfoF is responsible for the hydroxylation of the flavonoid skeleton at position C3. The pathway begins with the PKS-NRPS hybrid synthetase cfoA that uses benzoic acid or p-hydroxybenzoic acid as a starter unit with four rounds of chain elongation using malonyl-CoA to form the chalcone skeleton. Then, a new type of chalcone isomerase, cfoK, catalyzes the conversion of the chalcone into a flavanone by a histidine-mediated oxa-Michael addition mechanism. The desaturation of flavanone to flavone is catalyzed by a new type of flavone synthase, the flavin mononucleotide (FMN)-dependent oxidoreductase cfoJ. Monooxygenases cfoF, cfoG, and P450 cfoH are responsible for the hydroxylation of the flavonoid skeleton at sites C3, C8, and C2', respectively. Like cfoF, the dehydratase cfoI plays also a role in the hydroxylation of position C3. Methyltransferases cfoB, cfoC, and cfoD then catalyze the methylation of C7-OH, C8-OH, and C3-OH, respectively. Finally, the monooxygenase cfoE is responsible for the chlorination of flavonoid at position C3'. This Aspergillus candidus protein is Monooxygenase cfoF.